A 589-amino-acid chain; its full sequence is Coiled-coil domain-containing protein 22 homolog (589 aa).

2 coiled-coil regions span residues 287 to 426 (KTPL…LQTK) and 523 to 589 (CEEL…TSRQ). The tract at residues 568–589 (EMQNESQRLEESIRRMEVTSRQ) is disordered. A compositionally biased stretch (basic and acidic residues) spans 574-589 (QRLEESIRRMEVTSRQ).

The protein belongs to the CCDC22 family.

This chain is Coiled-coil domain-containing protein 22 homolog, found in Aedes aegypti (Yellowfever mosquito).